A 133-amino-acid polypeptide reads, in one-letter code: MTLNLRIMAPNRIVWNSQTEQIILSTNSGQIGVLKDHTPLLTALDIGVIKIRIDSKWTTMALMGGFAMIDSNQVTILVNEAEEGNQIDLKNAQENFQLTQQSLLQAKSKKQIIEAKLAFKRAKARLEAISMIS.

This sequence belongs to the ATPase epsilon chain family. In terms of assembly, F-type ATPases have 2 components, CF(1) - the catalytic core - and CF(0) - the membrane proton channel. CF(1) has five subunits: alpha(3), beta(3), gamma(1), delta(1), epsilon(1). CF(0) has three main subunits: a, b and c.

It localises to the plastid. The protein resides in the chloroplast thylakoid membrane. Its function is as follows. Produces ATP from ADP in the presence of a proton gradient across the membrane. In Chara vulgaris (Common stonewort), this protein is ATP synthase epsilon chain, chloroplastic.